Consider the following 343-residue polypeptide: Major capsid protein VP1 (343 aa).

This sequence belongs to the polyomaviruses coat protein VP1 family. In terms of assembly, homomultimer; disulfide-linked. The virus capsid is composed of 72 icosahedral units, each one composed of five disulfide-linked copies of VP1. Interacts with minor capsid proteins VP2 and VP3.

The protein localises to the virion. The protein resides in the host nucleus. Its function is as follows. Forms an icosahedral capsid with a T=7 symmetry and a 46-48 nm diameter. The capsid is composed of 72 pentamers linked to each other by disulfide bonds and associated with VP2 or VP3 proteins. Interacts with sialic acids on the cell surface to provide virion attachment to target cell. Once attached, the virion is internalized by endocytosis and traffics to the endoplasmic reticulum. Inside the endoplasmic reticulum, the protein folding machinery isomerizes VP1 interpentamer disulfide bonds, thereby triggering initial uncoating. Next, the virion uses the endoplasmic reticulum-associated degradation machinery to probably translocate in the cytosol before reaching the nucleus. Nuclear entry of the viral DNA involves the selective exposure and importin recognition of VP2/Vp3 nuclear localization signal. In late phase of infection, neo-synthesized VP1 encapsulates replicated genomic DNA in the nucleus, and participates in rearranging nucleosomes around the viral DNA. The sequence is that of Major capsid protein VP1 from Psittacidae (parrots).